Reading from the N-terminus, the 72-residue chain is Translation initiation factor IF-1 (72 aa).

In terms of domain architecture, S1-like spans Met1–Lys72.

It belongs to the IF-1 family. In terms of assembly, component of the 30S ribosomal translation pre-initiation complex which assembles on the 30S ribosome in the order IF-2 and IF-3, IF-1 and N-formylmethionyl-tRNA(fMet); mRNA recruitment can occur at any time during PIC assembly.

The protein resides in the cytoplasm. In terms of biological role, one of the essential components for the initiation of protein synthesis. Stabilizes the binding of IF-2 and IF-3 on the 30S subunit to which N-formylmethionyl-tRNA(fMet) subsequently binds. Helps modulate mRNA selection, yielding the 30S pre-initiation complex (PIC). Upon addition of the 50S ribosomal subunit IF-1, IF-2 and IF-3 are released leaving the mature 70S translation initiation complex. The sequence is that of Translation initiation factor IF-1 from Xylella fastidiosa (strain Temecula1 / ATCC 700964).